The following is a 215-amino-acid chain: Probable nicotinate-nucleotide adenylyltransferase (215 aa).

This sequence belongs to the NadD family.

It catalyses the reaction nicotinate beta-D-ribonucleotide + ATP + H(+) = deamido-NAD(+) + diphosphate. Its pathway is cofactor biosynthesis; NAD(+) biosynthesis; deamido-NAD(+) from nicotinate D-ribonucleotide: step 1/1. In terms of biological role, catalyzes the reversible adenylation of nicotinate mononucleotide (NaMN) to nicotinic acid adenine dinucleotide (NaAD). In Coxiella burnetii (strain Dugway 5J108-111), this protein is Probable nicotinate-nucleotide adenylyltransferase.